The sequence spans 165 residues: 2-C-methyl-D-erythritol 2,4-cyclodiphosphate synthase (165 aa).

A divalent metal cation is bound by residues aspartate 8 and histidine 10. 4-CDP-2-C-methyl-D-erythritol 2-phosphate contacts are provided by residues 8-10 and 34-35; these read DVH and HS. Residue histidine 42 participates in a divalent metal cation binding. 4-CDP-2-C-methyl-D-erythritol 2-phosphate is bound by residues 56 to 58, 61 to 65, 132 to 135, phenylalanine 139, and arginine 142; these read DIG, FPDTD, and TTTE.

The protein belongs to the IspF family. In terms of assembly, homotrimer. A divalent metal cation is required as a cofactor.

The enzyme catalyses 4-CDP-2-C-methyl-D-erythritol 2-phosphate = 2-C-methyl-D-erythritol 2,4-cyclic diphosphate + CMP. The protein operates within isoprenoid biosynthesis; isopentenyl diphosphate biosynthesis via DXP pathway; isopentenyl diphosphate from 1-deoxy-D-xylulose 5-phosphate: step 4/6. Functionally, involved in the biosynthesis of isopentenyl diphosphate (IPP) and dimethylallyl diphosphate (DMAPP), two major building blocks of isoprenoid compounds. Catalyzes the conversion of 4-diphosphocytidyl-2-C-methyl-D-erythritol 2-phosphate (CDP-ME2P) to 2-C-methyl-D-erythritol 2,4-cyclodiphosphate (ME-CPP) with a corresponding release of cytidine 5-monophosphate (CMP). In Halothermothrix orenii (strain H 168 / OCM 544 / DSM 9562), this protein is 2-C-methyl-D-erythritol 2,4-cyclodiphosphate synthase.